The following is a 276-amino-acid chain: Shikimate dehydrogenase (NADP(+)) (276 aa).

Residues serine 15 to serine 17 and threonine 63 each bind shikimate. The Proton acceptor role is filled by lysine 67. Residue aspartate 79 coordinates NADP(+). Residues asparagine 88 and aspartate 103 each contribute to the shikimate site. NADP(+) contacts are provided by residues glycine 130 to alanine 134, asparagine 154 to arginine 159, and isoleucine 217. Position 219 (tyrosine 219) interacts with shikimate. Glycine 240 lines the NADP(+) pocket.

It belongs to the shikimate dehydrogenase family. As to quaternary structure, homodimer.

The catalysed reaction is shikimate + NADP(+) = 3-dehydroshikimate + NADPH + H(+). It participates in metabolic intermediate biosynthesis; chorismate biosynthesis; chorismate from D-erythrose 4-phosphate and phosphoenolpyruvate: step 4/7. Its function is as follows. Involved in the biosynthesis of the chorismate, which leads to the biosynthesis of aromatic amino acids. Catalyzes the reversible NADPH linked reduction of 3-dehydroshikimate (DHSA) to yield shikimate (SA). This is Shikimate dehydrogenase (NADP(+)) from Oceanobacillus iheyensis (strain DSM 14371 / CIP 107618 / JCM 11309 / KCTC 3954 / HTE831).